The following is a 442-amino-acid chain: Serine protease AprX (442 aa).

The Peptidase S8 domain maps to 122-439 (KALLDTATEA…AGAVNAENSV (318 aa)). Catalysis depends on charge relay system residues Asp-155 and His-187. Residues 318-337 (DNNTASSDDDTVASFSSRGP) form a disordered region. The active-site Charge relay system is Ser-384. The interval 423-442 (EDPNIYGAGAVNAENSVPGQ) is disordered.

It belongs to the peptidase S8 family.

It localises to the cytoplasm. With respect to regulation, is completely inhibited by phenylmethanesulphonylfluoride (PMSF) in vitro. Displays serine protease activity. Seems to have a broad substrate specificity. The protein is Serine protease AprX (aprX) of Bacillus subtilis (strain 168).